A 590-amino-acid polypeptide reads, in one-letter code: Nuclear receptor subfamily 2 group C member 1 (590 aa).

Residues 1-166 (MATIEEIAHQ…RLQRCIAFGM (166 aa)) are required for interaction with KAT2B. The nuclear receptor DNA-binding region spans 98–173 (FDLCVVCGDK…FGMKQDSVQC (76 aa)). 2 consecutive NR C4-type zinc fingers follow at residues 101–121 (CVVC…CEGC) and 137–156 (CRGS…CQYC). Serine 185 and serine 203 each carry phosphoserine. Residue threonine 208 is modified to Phosphothreonine. A Phosphothreonine; by MAPK1 modification is found at threonine 210. Residue lysine 238 forms a Glycyl lysine isopeptide (Lys-Gly) (interchain with G-Cter in SUMO); alternate linkage. Residue lysine 238 forms a Glycyl lysine isopeptide (Lys-Gly) (interchain with G-Cter in SUMO2); alternate linkage. Residues 333 to 577 (EGMEGSPHLI…SVIPHILKME (245 aa)) form the NR LBD domain. A phosphoserine; by PKC mark is found at serine 461 and serine 568. Positions 571–590 (PHILKMEPADYNSQIIGHSL) are required for interaction with NRIP1. A Glycyl lysine isopeptide (Lys-Gly) (interchain with G-Cter in SUMO2) cross-link involves residue lysine 575.

Belongs to the nuclear hormone receptor family. NR2 subfamily. In terms of assembly, homodimer. Heterodimer; with NR2C2 which is required for chromatin remodeling and for binding to promoter regions such as globin DR1 repeats. Interacts with ESR1; the interaction prevents homodimerization of ESR1 and suppresses its transcriptional activity and cell growth. Interacts with NRIP1 (via its LXXLL motifs); the interaction provides corepressor activity. Interacts with HDAC3 (via the DNA-binding domain); the interaction recruits phosphorylated NR2C1 to PML bodies for sumoylation. Interacts with HDAC4 (via the DNA-binding domain). Interacts with PIAS1; the interaction is required for sumoylation of NR2C1. Interacts with UBE2I; the interaction is required for sumoylation of NR2C1. Interacts with KAT2B; the interaction acts as a corepressor of gene expression. Sumoylation requires both PIAS1 and UBE2I. Sumoylation appears to dissociate NR2C1 from the PML nuclear bodies. Enhances the interaction with NRIP1 but inhibits interaction with KAT2B. In proliferating cells, stimulation by all-trans retinoic acid, activation of MAPK1-mediated phosphorylation and recruitment to PML bodies with subsequent sumoylation, suppresses OCT4 expression. Post-translationally, phosphorylated on several serine and threonine residues. Phosphorylation on Thr-210, stimulated by all-trans retinoic acid (atRA) mediates PML location and sumoylation in proliferating cells which then modulates its association with effector molecules, KAT2B and NRIP1. Phosphorylation on Ser-568 by PKC is important for protein stability and function as activator of RARB. In terms of tissue distribution, isoform 1 is highly expressed in the adlumenal compartment of the seminiferous tubule of adult testes (at protein level) and in the eyes of newborn animals. Weakly expressed in other adult organs including the seminal vesicle, prostate, ovary, adrenal gland, heart, thymus, placenta and brain. Expressed during embryonic stages in developing eyes, brain and cartilage primordia (at protein level). Also expressed in the developing spinal motor neurons and in the sympathetic-, parasympathetic- and sensory ganglia of the embryonic PNS. Expressed in the developing neural epithelia of the inner ear, nasal cavity, tongue and retina. At day 16.5, expressed in various tissues including kidney and intestine. In contrast, isoform 2 is widely expressed at a low level throughout the adult testis.

It localises to the nucleus. The protein localises to the PML body. Functionally, orphan nuclear receptor. Binds the IR7 element in the promoter of its own gene in an autoregulatory negative feedback mechanism. Primarily repressor of a broad range of genes including ESR1 and RARB. Together with NR2C2, forms the core of the DRED (direct repeat erythroid-definitive) complex that represses embryonic and fetal globin transcription. Binds to hormone response elements (HREs) consisting of two 5'-AGGTCA-3' half site direct repeat consensus sequences. Also activator of OCT4 gene expression. Plays a fundamental role in early embryogenesis and regulates embryonic stem cell proliferation and differentiation. Mediator of retinoic acid-regulated preadipocyte proliferation. The chain is Nuclear receptor subfamily 2 group C member 1 from Mus musculus (Mouse).